The primary structure comprises 393 residues: Methyltransferase-like protein 22 (393 aa).

Residues 54–87 (WTDSGAEDSGPTDVSTEEMPPAGSGSGHSHEDLS) form a disordered region. A Phosphoserine modification is found at serine 120.

This sequence belongs to the methyltransferase superfamily. METTL22 family. Interacts with members of the heat shock protein 90 and 70 families; these proteins probably are methylation substrates.

The protein localises to the nucleus. The enzyme catalyses L-lysyl-[protein] + 3 S-adenosyl-L-methionine = N(6),N(6),N(6)-trimethyl-L-lysyl-[protein] + 3 S-adenosyl-L-homocysteine + 3 H(+). Protein N-lysine methyltransferase. Trimethylates KIN at Lys-135 (in vitro). The polypeptide is Methyltransferase-like protein 22 (Mettl22) (Mus musculus (Mouse)).